Here is a 107-residue protein sequence, read N- to C-terminus: Probable insulin-like peptide beta-type 3 (107 aa).

Positions 1–19 (MKLSVVLALFIIFQLGAAS) are cleaved as a signal peptide. A propeptide spanning residues 20–55 (LMRNWMFDFEKELEHDYDDSEIGFHNIHSLMARSRR) is cleaved from the precursor. Intrachain disulfides connect Cys62/Cys90, Cys74/Cys103, Cys78/Cys104, and Cys89/Cys94.

Belongs to the insulin family.

The protein resides in the secreted. This chain is Probable insulin-like peptide beta-type 3 (ins-3), found in Caenorhabditis elegans.